The following is a 236-amino-acid chain: Chaperone protein TorD (236 aa).

The protein belongs to the TorD/DmsD family. TorD subfamily.

The protein localises to the cytoplasm. Involved in the biogenesis of TorA. Acts on TorA before the insertion of the molybdenum cofactor and, as a result, probably favors a conformation of the apoenzyme that is competent for acquiring the cofactor. The sequence is that of Chaperone protein TorD from Colwellia psychrerythraea (strain 34H / ATCC BAA-681) (Vibrio psychroerythus).